The chain runs to 120 residues: NAD(P)H-quinone oxidoreductase subunit 3, organellar chromatophore (120 aa).

A run of 3 helical transmembrane segments spans residues 6–26, 64–84, and 89–109; these read GYDAFLGFLLIATAVPVLALL, MFALVFVIFDVETVFLYPWAV, and LGLLAFIEALIFIAILVIALA.

The protein belongs to the complex I subunit 3 family. In terms of assembly, NDH is composed of at least 16 different subunits, 5 of which are encoded in the nucleus.

It localises to the plastid. It is found in the organellar chromatophore thylakoid membrane. The catalysed reaction is a plastoquinone + NADH + (n+1) H(+)(in) = a plastoquinol + NAD(+) + n H(+)(out). It catalyses the reaction a plastoquinone + NADPH + (n+1) H(+)(in) = a plastoquinol + NADP(+) + n H(+)(out). Functionally, NDH shuttles electrons from NAD(P)H:plastoquinone, via FMN and iron-sulfur (Fe-S) centers, to quinones in the photosynthetic chain and possibly in a chloroplast respiratory chain. The immediate electron acceptor for the enzyme in this species is believed to be plastoquinone. Couples the redox reaction to proton translocation, and thus conserves the redox energy in a proton gradient. The chain is NAD(P)H-quinone oxidoreductase subunit 3, organellar chromatophore from Paulinella chromatophora.